A 425-amino-acid chain; its full sequence is Enolase (425 aa).

Glutamine 163 is a (2R)-2-phosphoglycerate binding site. Glutamate 205 serves as the catalytic Proton donor. Positions 242, 285, and 312 each coordinate Mg(2+). Residues lysine 337, arginine 366, serine 367, and lysine 388 each contribute to the (2R)-2-phosphoglycerate site. Lysine 337 functions as the Proton acceptor in the catalytic mechanism.

The protein belongs to the enolase family. It depends on Mg(2+) as a cofactor.

It localises to the cytoplasm. The protein resides in the secreted. It is found in the cell surface. It carries out the reaction (2R)-2-phosphoglycerate = phosphoenolpyruvate + H2O. It functions in the pathway carbohydrate degradation; glycolysis; pyruvate from D-glyceraldehyde 3-phosphate: step 4/5. Catalyzes the reversible conversion of 2-phosphoglycerate (2-PG) into phosphoenolpyruvate (PEP). It is essential for the degradation of carbohydrates via glycolysis. This is Enolase from Paracoccus denitrificans (strain Pd 1222).